The primary structure comprises 156 residues: RNA polymerase sigma factor SigS (156 aa).

The Polymerase core binding motif lies at 29 to 44; it reads EYYQLLLIKMWQLSQI. A DNA-binding region (H-T-H motif) is located at residues 126–145; the sequence is QFEIAEIMSLSLSTIKLIKM.

Belongs to the sigma-70 factor family.

Its function is as follows. Sigma factors are initiation factors that promote the attachment of RNA polymerase to specific initiation sites and are then released. Sigma-S contributes to the protection against external stress, thus playing a role in cellular fitness and survival. This chain is RNA polymerase sigma factor SigS (sigS), found in Staphylococcus aureus (strain Mu50 / ATCC 700699).